The sequence spans 172 residues: MNLKEHIRVIENFPKEGISFKDVTTILQDGKVLNYTIDKLAENLKDKKIDKIVGPEARGFLFGTPLAYKLGVGFVPVRKKGKLPYETISCKYDLEYGQDELQIHKDSIKKGDKVAIVDDLLATGGTIASVVKLVEELGGEVVNVSFVIELTDLKGKDKLEGYDINSLVQYNI.

It belongs to the purine/pyrimidine phosphoribosyltransferase family. In terms of assembly, homodimer.

It is found in the cytoplasm. The enzyme catalyses AMP + diphosphate = 5-phospho-alpha-D-ribose 1-diphosphate + adenine. It functions in the pathway purine metabolism; AMP biosynthesis via salvage pathway; AMP from adenine: step 1/1. Functionally, catalyzes a salvage reaction resulting in the formation of AMP, that is energically less costly than de novo synthesis. This Clostridium botulinum (strain ATCC 19397 / Type A) protein is Adenine phosphoribosyltransferase.